The sequence spans 156 residues: Ribosomal RNA large subunit methyltransferase H (156 aa).

S-adenosyl-L-methionine is bound by residues Leu73, Gly104, and 123 to 128; that span reads VSSLTL.

This sequence belongs to the RNA methyltransferase RlmH family. Homodimer.

The protein localises to the cytoplasm. The enzyme catalyses pseudouridine(1915) in 23S rRNA + S-adenosyl-L-methionine = N(3)-methylpseudouridine(1915) in 23S rRNA + S-adenosyl-L-homocysteine + H(+). Functionally, specifically methylates the pseudouridine at position 1915 (m3Psi1915) in 23S rRNA. The protein is Ribosomal RNA large subunit methyltransferase H of Burkholderia mallei (strain NCTC 10247).